The primary structure comprises 131 residues: MKKQGIFNSQISYFVASMGHKDMLSIVDMGYPIPKDATFVDLVFDKGIPNFIDTIKMVLYELEVEKVIIAGEMEVNNLKNYQKVIDIFSNIEIEKKSHEEFKDIAKNSKFFIRTGECTPFSNIILVSGVIF.

Histidine 20 acts as the Proton donor in catalysis. Residues aspartate 28, histidine 98, and 120–122 (FSN) contribute to the substrate site.

The protein belongs to the RbsD / FucU family. RbsD subfamily. As to quaternary structure, homodecamer.

Its subcellular location is the cytoplasm. The enzyme catalyses beta-D-ribopyranose = beta-D-ribofuranose. It participates in carbohydrate metabolism; D-ribose degradation; D-ribose 5-phosphate from beta-D-ribopyranose: step 1/2. Catalyzes the interconversion of beta-pyran and beta-furan forms of D-ribose. This Petrotoga mobilis (strain DSM 10674 / SJ95) protein is D-ribose pyranase.